Here is a 407-residue protein sequence, read N- to C-terminus: MKKKQQQHPGGGTDPWPHGAPVGGAPPCLGSCKRRIPLLPFLRFSLRDYGFCMATLLVFCLGSLFYQLSGGPPRFLLDLRQYLGNSTYLDDHGPPPSKVLPFPSQVVYNRVGKCGSRTVVLLLRILSEKHGFNLVTSDIHNKTRLTKNEQMELIKNISTAEQPYLFTRHVHFLNFSRFGGDQPVYINIIRDPVSRFLSNYFFRRFGDWRGEQNHMIRTPSMRQEERYLDINECILENYPECSNPRLFYIIPYFCGQHPRCREPGEWALERAKLNVNENFLLVGILEELEDVLLLLERFLPHYFKGVLSIYKDPEHRKLGNMTVTVRKTVPSPEAVQILYQRMRYEYEFYHYVREQFHLLKRKLGLKSRVSGPPVRPQFFIPTPLETEEPIDDEEQDDEKWLEDIYKR.

Positions Met-1–Ala-20 are disordered. Residues Met-1–Tyr-49 are Cytoplasmic-facing. Residues Gly-50–Gly-70 form a helical; Signal-anchor for type II membrane protein membrane-spanning segment. The Lumenal segment spans residues Gly-71–Arg-407. 3 N-linked (GlcNAc...) asparagine glycosylation sites follow: Asn-85, Asn-141, and Asn-156. His-169 is a catalytic residue. 2 N-linked (GlcNAc...) asparagine glycosylation sites follow: Asn-174 and Asn-320. Residues Thr-386–Trp-400 are compositionally biased toward acidic residues. The interval Thr-386–Arg-407 is disordered.

This sequence belongs to the sulfotransferase 3 family.

The protein localises to the golgi apparatus membrane. In terms of biological role, sulfotransferase that catalyzes the transfer of sulfate to the position 2 of uronyl residues in glycosaminoglycan chains. Has mainly activity toward iduronyl residues in dermatan sulfate, and weaker activity toward glucuronyl residues of chondroitin sulfate. Has no activity toward desulfated N-resulfated heparin. The sequence is that of Uronyl 2-sulfotransferase from Mus musculus (Mouse).